The primary structure comprises 1123 residues: RNA-binding protein 6 (1123 aa).

2 disordered regions span residues 1 to 391 (MWGD…EGGL) and 413 to 454 (LPGS…EEKP). Ser-17 is modified (phosphoserine). Residue Lys-36 forms a Glycyl lysine isopeptide (Lys-Gly) (interchain with G-Cter in SUMO2) linkage. Residues 79 to 97 (DGPHGDYRGGEGPGHDFRG) are compositionally biased toward basic and acidic residues. The span at 98 to 114 (GDFSSSDFQSRDSSQLD) shows a compositional bias: low complexity. Composition is skewed to basic and acidic residues over residues 115–131 (FRGRDIHSGDFRDREGP) and 145–237 (YRGR…DFRG). Residue Ser-240 is modified to Phosphoserine. Basic and acidic residues-rich tracts occupy residues 245 to 286 (LDFR…REMP) and 301 to 323 (QDREHSGMNVNRREESTHDHTIE). Lys-331 participates in a covalent cross-link: Glycyl lysine isopeptide (Lys-Gly) (interchain with G-Cter in SUMO2). Positions 332–354 (GEFEHSETREGETQGVAFEHESP) are enriched in basic and acidic residues. At Thr-344 the chain carries Phosphothreonine. Residues 356–365 (DFQNSQSPVQ) show a composition bias toward polar residues. A phosphoserine mark is found at Ser-360 and Ser-362. 2 stretches are compositionally biased toward basic and acidic residues: residues 366–391 (DQDKSQLSGREEQSSDAGLFKEEGGL) and 431–454 (KTARDAQRDLQDQDYRTGPSEEKP). Glycyl lysine isopeptide (Lys-Gly) (interchain with G-Cter in SUMO2) cross-links involve residues Lys-386, Lys-453, Lys-469, and Lys-569. One can recognise an RRM domain in the interval 456-536 (RLIRLSGVPE…KEVTLEYVSS (81 aa)). 3 disordered regions span residues 574-654 (TYPQ…QDGE), 741-787 (KRRN…QSSS), and 827-948 (EEEI…EEDK). Basic and acidic residues-rich tracts occupy residues 597 to 654 (PADK…QDGE) and 742 to 754 (RRNDSGDHSDHMH). A compositionally biased stretch (polar residues) spans 772–787 (SDWSSDTNRQGQQSSS). Residues 843–860 (SKKEMSKRDGKEKKDRGV) show a composition bias toward basic and acidic residues. Residues Lys-871, Lys-879, and Lys-887 each participate in a glycyl lysine isopeptide (Lys-Gly) (interchain with G-Cter in SUMO2) cross-link. At Ser-891 the chain carries Phosphoserine. Positions 910-922 (GDSDYEEEEEEEQ) are enriched in acidic residues. Residues 934-948 (QKREEQTKKENEEDK) are compositionally biased toward basic and acidic residues. Glycyl lysine isopeptide (Lys-Gly) (interchain with G-Cter in SUMO2) cross-links involve residues Lys-935, Lys-948, Lys-991, and Lys-1019. Over residues 1004–1051 (EREGKFKGRGNDRREKLQSFDSPERKRIKYSRETDSDRKLVDKEDIDT) the composition is skewed to basic and acidic residues. Residues 1004–1106 (EREGKFKGRG…RTSKRQSNET (103 aa)) are disordered. Phosphoserine is present on residues Ser-1022 and Ser-1025. Residues Lys-1042, Lys-1046, and Lys-1066 each participate in a glycyl lysine isopeptide (Lys-Gly) (interchain with G-Cter in SUMO2) cross-link. Residues 1051 to 1097 (TSSKGGCVQQATGWRKGTGLGYGHPGLASSEEAEGRMRGPSVGASGR) enclose the G-patch domain.

As to quaternary structure, may interact with FAM168B. As to expression, ubiquitous in adults.

Its subcellular location is the nucleus. Functionally, specifically binds poly(G) RNA homopolymers in vitro. The protein is RNA-binding protein 6 (RBM6) of Homo sapiens (Human).